Here is a 485-residue protein sequence, read N- to C-terminus: Sodium-coupled neutral amino acid symporter 1 (485 aa).

Topologically, residues 1–74 (MMHFKSGLEL…EYIPGTTSLG (74 aa)) are cytoplasmic. At Ser6 the chain carries Phosphoserine. The residue at position 11 (Thr11) is a Phosphothreonine. Ser25, Ser28, Ser49, and Ser52 each carry phosphoserine. Thr54 is modified (phosphothreonine). Phosphoserine is present on Ser56. Residues 75 to 97 (MSVFNLSNAIMGSGILGLAFALA) traverse the membrane as a helical segment. Over 98–112 (NTGILLFLILLTSVT) the chain is Extracellular. A helical transmembrane segment spans residues 113–133 (LLSIYSINLLLICSKETGCMV). Over 134 to 148 (YEKLGEQVFGTTGKL) the chain is Cytoplasmic. A helical transmembrane segment spans residues 149-169 (VIFGATSLQNTGAMLSYLFIV). Residues 170-188 (KNELPSAIKSLMGEEDAFS) are Extracellular-facing. The helical transmembrane segment at 189–211 (AWYVDGRVLVVMVTFGIILPLCL) threads the bilayer. Topologically, residues 212–216 (LKNLG) are cytoplasmic. The chain crosses the membrane as a helical span at residues 217-237 (YLGYTSGFSLSCMMFFLIVVI). Residues 238–273 (YKKFQTPCMSVEQNSTVSANVTDACTPKYVTFNSKT) are Extracellular-facing. Cys245 and Cys262 are joined by a disulfide. Residues Asn251 and Asn257 are each glycosylated (N-linked (GlcNAc...) asparagine). A helical membrane pass occupies residues 274–294 (VYALPTIAFAFVCHPSVLPIY). The Cytoplasmic portion of the chain corresponds to 295–310 (SELKDRSQKKMQMVSN). Residues 311–331 (ISFFAMFVMYFLTAIFGYLTF) form a helical membrane-spanning segment. The Extracellular segment spans residues 332 to 348 (YEKVQSDLLHKYQSTGD). The chain crosses the membrane as a helical span at residues 349 to 369 (ILILTVRLAVIVAVILTVPVL). Topologically, residues 370–391 (FFTVRSSLFELAKKTKFHLCRH) are cytoplasmic. The helical transmembrane segment at 392 to 412 (VLVTIILLIIINLLVIFIPSM) threads the bilayer. The Extracellular portion of the chain corresponds to 413–414 (KD). A helical membrane pass occupies residues 415–435 (IFGVVGVTSANMLIFILPSSL). At 436–450 (YLKITNQDGDKGTQR) the chain is on the cytoplasmic side. A helical membrane pass occupies residues 451–471 (IWAALFLGLGVLFSLISIPLV). Residues 472–485 (IYDWACSSGTDEGH) are Extracellular-facing.

The protein belongs to the amino acid/polyamine transporter 2 family. Post-translationally, N-glycosylation plays an important role in the L-glutamine transport. As to expression, specifically expressed in brain and retina (at protein level). Also detected in spleen, small intestine and lung.

It is found in the cell membrane. The enzyme catalyses L-glutamine(in) + Na(+)(in) = L-glutamine(out) + Na(+)(out). It carries out the reaction L-alanine(in) + Na(+)(in) = L-alanine(out) + Na(+)(out). The catalysed reaction is L-histidine(in) + Na(+)(in) = L-histidine(out) + Na(+)(out). It catalyses the reaction L-asparagine(in) + Na(+)(in) = L-asparagine(out) + Na(+)(out). The enzyme catalyses L-serine(in) + Na(+)(in) = L-serine(out) + Na(+)(out). It carries out the reaction L-cysteine(in) + Na(+)(in) = L-cysteine(out) + Na(+)(out). The catalysed reaction is L-methionine(in) + Na(+)(in) = L-methionine(out) + Na(+)(out). It catalyses the reaction glycine(in) + Na(+)(in) = glycine(out) + Na(+)(out). The enzyme catalyses L-threonine(in) + Na(+)(in) = L-threonine(out) + Na(+)(out). It carries out the reaction L-proline(in) + Na(+)(in) = L-proline(out) + Na(+)(out). Its activity is regulated as follows. Inhibited by alpha-(methylamino)isobutyric acid (MeAIB). Inhibited by lithium, potassium, choline ions, N-methylglucamine. The pH dependence has an allosteric effect on the transport. Functionally, symporter that cotransports short-chain neutral amino acids and sodium ions from the extraccellular to the intracellular side of the cell membrane. The transport is elctrogenic, pH dependent and driven by the Na(+) electrochemical gradient. Participates in the astroglia-derived glutamine transport into GABAergic interneurons for neurotransmitter GABA de novo synthesis. May also contributes to amino acid transport in placental trophoblast. Regulates synaptic plasticity. The sequence is that of Sodium-coupled neutral amino acid symporter 1 from Mus musculus (Mouse).